Consider the following 521-residue polypeptide: DEAD-box ATP-dependent RNA helicase 12 (521 aa).

The segment at 1-97 (MHHPRARYPP…QQWLRRDQAT (97 aa)) is disordered. Residues 13–50 (TSGGGGGGGGGGGGGRGNGGGGFGGGGGGGGGNHGYYG) are compositionally biased toward gly residues. Residues 51–89 (RGPQPQPQQQHYHHQAQQLHQHQQQQQHAQRNSSSQQQQ) are compositionally biased toward low complexity. Positions 147–175 (NEFEDYFLKRELLMGIYEKGFERPSPIQE) match the Q motif motif. Positions 178–348 (IPIALTGSDI…EKYLPRPYVI (171 aa)) constitute a Helicase ATP-binding domain. 191 to 198 (AKNGTGKT) is a binding site for ATP. Residues 296–299 (DEAD) carry the DEAD box motif. In terms of domain architecture, Helicase C-terminal spans 358-518 (GITQYYAFVE…TIPPQIDLAV (161 aa)).

This sequence belongs to the DEAD box helicase family. DDX6/DHH1 subfamily.

Its subcellular location is the cytoplasm. The protein localises to the P-body. It carries out the reaction ATP + H2O = ADP + phosphate + H(+). Functionally, ATP-dependent RNA helicase involved in mRNA turnover, and more specifically in mRNA decapping. The polypeptide is DEAD-box ATP-dependent RNA helicase 12 (Oryza sativa subsp. japonica (Rice)).